A 417-amino-acid polypeptide reads, in one-letter code: Carboxypeptidase A2 (417 aa).

The N-terminal stretch at 1-16 is a signal peptide; sequence MRLTPLLVALFGYIYC. The propeptide at 17-112 is activation peptide; it reads QETFVGDQVL…EMLFNQQRER (96 aa). The Peptidase M14 domain occupies 120–412; that stretch reads AYHTLEEIYQ…LGLKTIMEHV (293 aa). Residues His-177 and Glu-180 each coordinate Zn(2+). Substrate contacts are provided by residues 177–180, Arg-235, and 252–253; these read HARE and NR. Cys-246 and Cys-269 form a disulfide bridge. Position 304 (His-304) interacts with Zn(2+). Residue 305–306 coordinates substrate; that stretch reads SY. The cysteines at positions 318 and 352 are disulfide-linked. Tyr-356 is a substrate binding site. Glu-378 (proton donor/acceptor) is an active-site residue.

The protein belongs to the peptidase M14 family. Zn(2+) serves as cofactor.

The protein localises to the secreted. The catalysed reaction is Similar to that of carboxypeptidase A (EC 3.4.17.1), but with a preference for bulkier C-terminal residues.. In terms of biological role, carboxypeptidase that catalyzes the release of a C-terminal amino acid, with a preference for large aromatic C-terminal residues. This chain is Carboxypeptidase A2 (Cpa2), found in Mus musculus (Mouse).